The primary structure comprises 363 residues: Transcription factor PIF6 (363 aa).

2 disordered regions span residues 154-204 (SEGS…RNDI) and 340-363 (IPNP…KTNR). Basic residues predominate over residues 178–188 (RTRKALVKRKR). Residues 188–237 (RNAEAYNSPERNQRNDINKKMRTLQNLLPNSHKDDNESMLDEAINYMTNL) enclose the bHLH domain. Residues 340 to 350 (IPNPNSLSNLD) show a composition bias toward polar residues. A compositionally biased stretch (basic residues) spans 354 to 363 (LHKKSRKTNR).

In terms of assembly, homodimer. Interacts with APRR1/TOC1. Binds to RGL2 and RGA. Associates to PTAC12/HMR/PAP5 which acts as a transcriptional coactivator. In terms of tissue distribution, mainly expressed in fruits and flowers and, to a lower extent, in leaves, stems, seedlings and roots.

The protein resides in the nucleus. Its function is as follows. Transcription factor. The sequence is that of Transcription factor PIF6 from Arabidopsis thaliana (Mouse-ear cress).